A 326-amino-acid polypeptide reads, in one-letter code: Phenylalanine--tRNA ligase alpha subunit (326 aa).

E251 is a binding site for Mg(2+).

This sequence belongs to the class-II aminoacyl-tRNA synthetase family. Phe-tRNA synthetase alpha subunit type 1 subfamily. Tetramer of two alpha and two beta subunits. Requires Mg(2+) as cofactor.

Its subcellular location is the cytoplasm. It catalyses the reaction tRNA(Phe) + L-phenylalanine + ATP = L-phenylalanyl-tRNA(Phe) + AMP + diphosphate + H(+). The sequence is that of Phenylalanine--tRNA ligase alpha subunit from Idiomarina loihiensis (strain ATCC BAA-735 / DSM 15497 / L2-TR).